A 325-amino-acid chain; its full sequence is DNA repair and recombination protein RadA (325 aa).

107–114 provides a ligand contact to ATP; sequence GEFGSGKT.

This sequence belongs to the eukaryotic RecA-like protein family.

Its function is as follows. Involved in DNA repair and in homologous recombination. Binds and assemble on single-stranded DNA to form a nucleoprotein filament. Hydrolyzes ATP in a ssDNA-dependent manner and promotes DNA strand exchange between homologous DNA molecules. The chain is DNA repair and recombination protein RadA from Methanococcoides burtonii (strain DSM 6242 / NBRC 107633 / OCM 468 / ACE-M).